Reading from the N-terminus, the 255-residue chain is Small ribosomal subunit protein eS1 (255 aa).

Residue Ala2 is modified to N-acetylalanine; partial.

This sequence belongs to the eukaryotic ribosomal protein eS1 family. As to quaternary structure, component of the small ribosomal subunit. Mature ribosomes consist of a small (40S) and a large (60S) subunit. The 40S subunit contains about 33 different proteins and 1 molecule of RNA (18S). The 60S subunit contains about 49 different proteins and 3 molecules of RNA (25S, 5.8S and 5S).

It is found in the cytoplasm. In Kluyveromyces lactis (strain ATCC 8585 / CBS 2359 / DSM 70799 / NBRC 1267 / NRRL Y-1140 / WM37) (Yeast), this protein is Small ribosomal subunit protein eS1.